The primary structure comprises 154 residues: 6,7-dimethyl-8-ribityllumazine synthase (154 aa).

Residues Phe-22 to Asn-23, Ala-56 to Glu-58, and Thr-80 to Ile-82 each bind 5-amino-6-(D-ribitylamino)uracil. A (2S)-2-hydroxy-3-oxobutyl phosphate-binding site is contributed by Ala-85 to Thr-86. His-88 serves as the catalytic Proton donor. Phe-113 contributes to the 5-amino-6-(D-ribitylamino)uracil binding site. (2S)-2-hydroxy-3-oxobutyl phosphate is bound at residue Arg-127.

It belongs to the DMRL synthase family. Forms an icosahedral capsid composed of 60 subunits, arranged as a dodecamer of pentamers. Can interact with riboflavin synthase, forming a lumazine synthase/riboflavin synthase complex, also designated as 'heavy riboflavin synthase complex', which consists of a trimer of riboflavin synthase enclosed within the icosahedral structure composed of 60 subunits of 6,7-dimethyl-8-ribityllumazine synthase.

The enzyme catalyses (2S)-2-hydroxy-3-oxobutyl phosphate + 5-amino-6-(D-ribitylamino)uracil = 6,7-dimethyl-8-(1-D-ribityl)lumazine + phosphate + 2 H2O + H(+). It participates in cofactor biosynthesis; riboflavin biosynthesis; riboflavin from 2-hydroxy-3-oxobutyl phosphate and 5-amino-6-(D-ribitylamino)uracil: step 1/2. Catalyzes the formation of 6,7-dimethyl-8-ribityllumazine by condensation of 5-amino-6-(D-ribitylamino)uracil with 3,4-dihydroxy-2-butanone 4-phosphate. This is the penultimate step in the biosynthesis of riboflavin. Is able to use the non-natural R enantiomer of 3,4-dihydroxy-2-butanone 4-phosphate as a substrate, but with less efficiency than the natural S enantiomer. Cannot use unphosphorylated 3,4-dihydroxy-2-butanone, 3,4-dihydroxy-2-butanone 3-phosphate or diacetyl as substrates. This chain is 6,7-dimethyl-8-ribityllumazine synthase (ribH), found in Bacillus subtilis (strain 168).